The following is a 336-amino-acid chain: UDP-N-acetylenolpyruvoylglucosamine reductase (336 aa).

An FAD-binding PCMH-type domain is found at 1–178 (MAHSLQTLHT…TTVHLALPKE (178 aa)). Arg154 is an active-site residue. Residue Ser222 is the Proton donor of the active site. Glu318 is an active-site residue.

Belongs to the MurB family. Requires FAD as cofactor.

The protein resides in the cytoplasm. The catalysed reaction is UDP-N-acetyl-alpha-D-muramate + NADP(+) = UDP-N-acetyl-3-O-(1-carboxyvinyl)-alpha-D-glucosamine + NADPH + H(+). It participates in cell wall biogenesis; peptidoglycan biosynthesis. Functionally, cell wall formation. This Pseudoalteromonas translucida (strain TAC 125) protein is UDP-N-acetylenolpyruvoylglucosamine reductase.